A 789-amino-acid polypeptide reads, in one-letter code: Probable phosphoketolase (789 aa).

Belongs to the XFP family. The cofactor is thiamine diphosphate.

This is Probable phosphoketolase from Brucella abortus (strain 2308).